We begin with the raw amino-acid sequence, 72 residues long: Conotoxin Ep11.1 (72 aa).

An N-terminal signal peptide occupies residues 1–19 (MKLCVTFLLILVILPSVTG). The propeptide occupies 20 to 32 (EKSSKRTLSGAAL). Disulfide bonds link Cys39-Cys53, Cys46-Cys58, Cys52-Cys63, and Cys57-Cys70.

Belongs to the conotoxin I1 superfamily. As to expression, expressed by the venom duct.

The protein localises to the secreted. This Conus episcopatus (Bishop's cone) protein is Conotoxin Ep11.1.